Consider the following 289-residue polypeptide: 2-hydroxy-6-oxononadienedioate/2-hydroxy-6-oxononatrienedioate hydrolase (289 aa).

The AB hydrolase-1 domain occupies 39 to 275 (TVVMLHGSGP…RCGHWAQWEH (237 aa)). Histidine 269 functions as the Proton acceptor in the catalytic mechanism.

The protein belongs to the AB hydrolase superfamily. MhpC family. Homodimer.

The enzyme catalyses (2Z,4E)-2-hydroxy-6-oxonona-2,4-dienedioate + H2O = (2Z)-2-hydroxypenta-2,4-dienoate + succinate + H(+). The catalysed reaction is (2Z,4E,7E)-2-hydroxy-6-oxonona-2,4,7-trienedioate + H2O = (2Z)-2-hydroxypenta-2,4-dienoate + fumarate + H(+). Its pathway is aromatic compound metabolism; 3-phenylpropanoate degradation. In terms of biological role, catalyzes the cleavage of the C5-C6 bond of 2-hydroxy-6-oxononadienedioate and 2-hydroxy-6-oxononatrienedioate, a dienol ring fission product of the bacterial meta-cleavage pathway for degradation of phenylpropionic acid. This Paraburkholderia xenovorans (strain LB400) protein is 2-hydroxy-6-oxononadienedioate/2-hydroxy-6-oxononatrienedioate hydrolase.